We begin with the raw amino-acid sequence, 257 residues long: Ribosome-inactivating protein charybdin (257 aa).

Residue E167 is part of the active site. A disulfide bridge connects residues C217 and C254.

The protein belongs to the ribosome-inactivating protein family. Type 1 RIP subfamily.

It catalyses the reaction Endohydrolysis of the N-glycosidic bond at one specific adenosine on the 28S rRNA.. Its function is as follows. Inhibits translation in rabbit reticulocytes. This is Ribosome-inactivating protein charybdin from Drimia maritima (Sea squill).